The chain runs to 197 residues: Probable thymidylate kinase (197 aa).

7-14 (GLDGSGKT) contacts ATP.

This sequence belongs to the thymidylate kinase family.

The catalysed reaction is dTMP + ATP = dTDP + ADP. In Halorubrum lacusprofundi (strain ATCC 49239 / DSM 5036 / JCM 8891 / ACAM 34), this protein is Probable thymidylate kinase.